A 199-amino-acid polypeptide reads, in one-letter code: MIARDDITGLILAGGRGSRMGGTDKGLQPLRGTPMAMHTMMRLTPQTGALMINANRNLAAYESFGVPVVTDSVPDFAGPLAGMLAGLEQCQTGWMVTAPCDSPFLPADLVPRLAQAIEAEGAELAIPVTVDTDGRRQLQPVFCLMPVSMLDDLIAYLNGGGRKIETWATSHRLAEVLFDDAGAFANINTLDELRTHEAG.

Residues 12-14, Lys-25, Asn-53, Asp-71, and Asp-101 each bind GTP; that span reads LAG. Asp-101 is a binding site for Mg(2+).

The protein belongs to the MobA family. In terms of assembly, monomer. Mg(2+) serves as cofactor.

The protein localises to the cytoplasm. It carries out the reaction Mo-molybdopterin + GTP + H(+) = Mo-molybdopterin guanine dinucleotide + diphosphate. Transfers a GMP moiety from GTP to Mo-molybdopterin (Mo-MPT) cofactor (Moco or molybdenum cofactor) to form Mo-molybdopterin guanine dinucleotide (Mo-MGD) cofactor. The polypeptide is Molybdenum cofactor guanylyltransferase (Cupriavidus pinatubonensis (strain JMP 134 / LMG 1197) (Cupriavidus necator (strain JMP 134))).